The chain runs to 61 residues: Small ribosomal subunit protein uS14 (61 aa).

Zn(2+) contacts are provided by C24, C27, C40, and C43.

Belongs to the universal ribosomal protein uS14 family. Zinc-binding uS14 subfamily. As to quaternary structure, part of the 30S ribosomal subunit. Contacts proteins S3 and S10. Requires Zn(2+) as cofactor.

Its function is as follows. Binds 16S rRNA, required for the assembly of 30S particles and may also be responsible for determining the conformation of the 16S rRNA at the A site. The chain is Small ribosomal subunit protein uS14 from Thermosipho melanesiensis (strain DSM 12029 / CIP 104789 / BI429).